The following is a 146-amino-acid chain: Transcriptional regulator MraZ (146 aa).

SpoVT-AbrB domains follow at residues 4–46 (TVFR…SQTE) and 75–118 (TVKV…PEQR).

This sequence belongs to the MraZ family. As to quaternary structure, forms oligomers.

The protein resides in the cytoplasm. Its subcellular location is the nucleoid. The protein is Transcriptional regulator MraZ of Mesomycoplasma hyopneumoniae (strain 232) (Mycoplasma hyopneumoniae).